The following is a 310-amino-acid chain: Homoserine kinase (310 aa).

85–95 (PKGLGLGSSGA) is a binding site for ATP.

This sequence belongs to the GHMP kinase family. Homoserine kinase subfamily.

It localises to the cytoplasm. It catalyses the reaction L-homoserine + ATP = O-phospho-L-homoserine + ADP + H(+). The protein operates within amino-acid biosynthesis; L-threonine biosynthesis; L-threonine from L-aspartate: step 4/5. Functionally, catalyzes the ATP-dependent phosphorylation of L-homoserine to L-homoserine phosphate. The protein is Homoserine kinase of Thermoplasma acidophilum (strain ATCC 25905 / DSM 1728 / JCM 9062 / NBRC 15155 / AMRC-C165).